The following is a 106-amino-acid chain: Large ribosomal subunit protein bL21 (106 aa).

The protein belongs to the bacterial ribosomal protein bL21 family. As to quaternary structure, part of the 50S ribosomal subunit. Contacts protein L20.

Its function is as follows. This protein binds to 23S rRNA in the presence of protein L20. This chain is Large ribosomal subunit protein bL21, found in Chlamydia felis (strain Fe/C-56) (Chlamydophila felis).